We begin with the raw amino-acid sequence, 190 residues long: Large ribosomal subunit protein bL17 (190 aa).

The span at 135–165 shows a compositional bias: low complexity; sequence AKAAPAAEEAPAEEAPAAEEAATEEAPAAEE. The interval 135–190 is disordered; the sequence is AKAAPAAEEAPAEEAPAAEEAATEEAPAAEETATEEAAAEEAPAAEEAPAEEKDAK.

Belongs to the bacterial ribosomal protein bL17 family. As to quaternary structure, part of the 50S ribosomal subunit. Contacts protein L32.

This chain is Large ribosomal subunit protein bL17, found in Pseudarthrobacter chlorophenolicus (strain ATCC 700700 / DSM 12829 / CIP 107037 / JCM 12360 / KCTC 9906 / NCIMB 13794 / A6) (Arthrobacter chlorophenolicus).